The primary structure comprises 182 residues: uncharacterized protein (182 aa).

Belongs to the staphylococcal tandem lipoprotein family.

This is an uncharacterized protein from Staphylococcus haemolyticus (strain JCSC1435).